A 329-amino-acid polypeptide reads, in one-letter code: Probable cell division protein WhiA (329 aa).

The H-T-H motif DNA-binding region spans 276–309 (SLEELGKVHEPPLTKDAIAGRIRRLLALADKTAR). A disordered region spans residues 308–329 (ARSNGEPTTLESLPVEMRDDRG). The span at 309 to 318 (RSNGEPTTLE) shows a compositional bias: polar residues.

It belongs to the WhiA family.

Its function is as follows. Involved in cell division and chromosome segregation. The protein is Probable cell division protein WhiA of Cutibacterium acnes (strain DSM 16379 / KPA171202) (Propionibacterium acnes).